The primary structure comprises 205 residues: Large ribosomal subunit protein eL15 (205 aa).

2 disordered regions span residues 70–90 (GRKR…HGVN) and 172–197 (RGLR…KRRN).

This sequence belongs to the eukaryotic ribosomal protein eL15 family.

The protein is Large ribosomal subunit protein eL15 (rpl15-1) of Dictyostelium discoideum (Social amoeba).